We begin with the raw amino-acid sequence, 464 residues long: NADH dehydrogenase [ubiquinone] flavoprotein 1, mitochondrial (464 aa).

A mitochondrion-targeting transit peptide spans methionine 1–phenylalanine 20. At lysine 81 the chain carries N6-acetyllysine; alternate. An N6-succinyllysine; alternate modification is found at lysine 81. Residue glycine 87–glycine 96 participates in NADH binding. At lysine 104 the chain carries N6-acetyllysine. Residue arginine 199–threonine 247 coordinates FMN. Arginine 257 is modified (omega-N-methylarginine). N6-acetyllysine is present on lysine 375. Residues cysteine 379, cysteine 382, cysteine 385, and cysteine 425 each contribute to the [4Fe-4S] cluster site.

This sequence belongs to the complex I 51 kDa subunit family. As to quaternary structure, core subunit of respiratory chain NADH dehydrogenase (Complex I) which is composed of 45 different subunits. This is a component of the flavoprotein-sulfur (FP) fragment of the enzyme. Interacts with RAB5IF. FMN is required as a cofactor. [4Fe-4S] cluster serves as cofactor.

Its subcellular location is the mitochondrion inner membrane. It catalyses the reaction a ubiquinone + NADH + 5 H(+)(in) = a ubiquinol + NAD(+) + 4 H(+)(out). Its function is as follows. Core subunit of the mitochondrial membrane respiratory chain NADH dehydrogenase (Complex I) which catalyzes electron transfer from NADH through the respiratory chain, using ubiquinone as an electron acceptor. Part of the peripheral arm of the enzyme, where the electrons from NADH are accepted by flavin mononucleotide (FMN) and then passed along a chain of iron-sulfur clusters by electron tunnelling to the final acceptor ubiquinone. Contains FMN, which is the initial electron acceptor as well as one iron-sulfur cluster. The chain is NADH dehydrogenase [ubiquinone] flavoprotein 1, mitochondrial from Pan troglodytes (Chimpanzee).